The following is a 1005-amino-acid chain: Espin-like protein (1005 aa).

ANK repeat units follow at residues 1 to 31, 35 to 64, 69 to 99, 103 to 132, 136 to 166, 170 to 200, 204 to 234, 238 to 267, 270 to 299, and 303 to 332; these read MEAQ…RPDI, LGAG…LPGN, NGAT…GLQD, SGVS…AATL, EGAL…GVNQ, SGAS…DVRL, DGMS…GLTA, EGAT…PIMR, WGGT…DPFL, and DGYT…PVRV. 2 disordered regions span residues 355-383 and 458-480; these read EERR…VPRE and ADHP…AAEQ. Positions 458–469 are enriched in basic and acidic residues; sequence ADHPPEDQDQSQ. Positions 502 to 539 form a coiled coil; that stretch reads EDDLVYLEKQINDLQLRRRCQEYESELGRLAAQLQALL. Disordered stretches follow at residues 611–643, 692–729, 764–794, and 951–975; these read LAQG…QREI, PRGD…GPGL, LEAQ…PRLG, and PHAS…SQGS.

Interacts with MYO3A (via C-terminus). Interacts with MYO3B (via C-terminus). As to expression, expressed in inner ear hair cells. Expressed in utricle hair bundles (at protein level). Expressed in choclea (at protein level).

It is found in the cell projection. Its subcellular location is the stereocilium. Binds to but does not cross-link actin. Required for the formation and maintenance of inner ear hair cell stereocilia and staircase formation. Essential for normal hearing. This chain is Espin-like protein (Espnl), found in Mus musculus (Mouse).